Reading from the N-terminus, the 432-residue chain is D-amino acid dehydrogenase (432 aa).

An FAD-binding site is contributed by 3 to 17; sequence VVILGSGVVGVASAW.

Belongs to the DadA oxidoreductase family. FAD is required as a cofactor.

It catalyses the reaction a D-alpha-amino acid + A + H2O = a 2-oxocarboxylate + AH2 + NH4(+). It participates in amino-acid degradation; D-alanine degradation; NH(3) and pyruvate from D-alanine: step 1/1. In terms of biological role, oxidative deamination of D-amino acids. The chain is D-amino acid dehydrogenase from Shigella boydii serotype 4 (strain Sb227).